The primary structure comprises 199 residues: dCTP deaminase, dUMP-forming (199 aa).

Residues 101–106 (KSSLGR), D119, 127–129 (TLE), Q148, Y162, and Q174 contribute to the dCTP site. E129 (proton donor/acceptor) is an active-site residue. Residues 163-199 (GSAAAGSKYQGQRGPTPSRSYLNFPLPSDAVDAVESR) are disordered. Residues 171 to 183 (YQGQRGPTPSRSY) are compositionally biased toward polar residues.

This sequence belongs to the dCTP deaminase family. Homotrimer.

It catalyses the reaction dCTP + 2 H2O = dUMP + NH4(+) + diphosphate. It functions in the pathway pyrimidine metabolism; dUMP biosynthesis; dUMP from dCTP: step 1/1. Functionally, bifunctional enzyme that catalyzes both the deamination of dCTP to dUTP and the hydrolysis of dUTP to dUMP without releasing the toxic dUTP intermediate. The polypeptide is dCTP deaminase, dUMP-forming (Nocardia farcinica (strain IFM 10152)).